Here is a 274-residue protein sequence, read N- to C-terminus: Dermonecrotic toxin SdSicTox-betaIIB1bii (274 aa).

The active site involves histidine 5. The Mg(2+) site is built by glutamate 25 and aspartate 27. Histidine 41 (nucleophile) is an active-site residue. Intrachain disulfides connect cysteine 45-cysteine 51 and cysteine 47-cysteine 190. Aspartate 85 serves as a coordination point for Mg(2+).

The protein belongs to the arthropod phospholipase D family. Class II subfamily. Requires Mg(2+) as cofactor. Expressed by the venom gland.

The protein localises to the secreted. The enzyme catalyses an N-(acyl)-sphingosylphosphocholine = an N-(acyl)-sphingosyl-1,3-cyclic phosphate + choline. It carries out the reaction an N-(acyl)-sphingosylphosphoethanolamine = an N-(acyl)-sphingosyl-1,3-cyclic phosphate + ethanolamine. The catalysed reaction is a 1-acyl-sn-glycero-3-phosphocholine = a 1-acyl-sn-glycero-2,3-cyclic phosphate + choline. It catalyses the reaction a 1-acyl-sn-glycero-3-phosphoethanolamine = a 1-acyl-sn-glycero-2,3-cyclic phosphate + ethanolamine. Dermonecrotic toxins cleave the phosphodiester linkage between the phosphate and headgroup of certain phospholipids (sphingolipid and lysolipid substrates), forming an alcohol (often choline) and a cyclic phosphate. This toxin acts on sphingomyelin (SM). It may also act on ceramide phosphoethanolamine (CPE), lysophosphatidylcholine (LPC) and lysophosphatidylethanolamine (LPE), but not on lysophosphatidylserine (LPS), and lysophosphatidylglycerol (LPG). It acts by transphosphatidylation, releasing exclusively cyclic phosphate products as second products. Induces dermonecrosis, hemolysis, increased vascular permeability, edema, inflammatory response, and platelet aggregation. The polypeptide is Dermonecrotic toxin SdSicTox-betaIIB1bii (Sicarius cf. damarensis (strain GJB-2008) (Six-eyed sand spider)).